The chain runs to 161 residues: Phosphopantetheine adenylyltransferase (161 aa).

A substrate-binding site is contributed by Thr-10. Residues 10–11 (TF) and His-18 each bind ATP. 3 residues coordinate substrate: Lys-42, Met-74, and Arg-88. ATP contacts are provided by residues 89 to 91 (GLR), Glu-99, and 124 to 130 (WSFISSS).

It belongs to the bacterial CoaD family. In terms of assembly, homohexamer. It depends on Mg(2+) as a cofactor.

The protein resides in the cytoplasm. The catalysed reaction is (R)-4'-phosphopantetheine + ATP + H(+) = 3'-dephospho-CoA + diphosphate. The protein operates within cofactor biosynthesis; coenzyme A biosynthesis; CoA from (R)-pantothenate: step 4/5. In terms of biological role, reversibly transfers an adenylyl group from ATP to 4'-phosphopantetheine, yielding dephospho-CoA (dPCoA) and pyrophosphate. This chain is Phosphopantetheine adenylyltransferase, found in Serratia marcescens.